Consider the following 74-residue polypeptide: MEKLTILLLVAAVLMSTQALMQEQRQKAKINLFSKRRLSAESWWEENGCSLWGPCTVNAECCSGDCDETCIFGS.

Residues 1–19 (MEKLTILLLVAAVLMSTQA) form the signal peptide. The propeptide occupies 20–34 (LMQEQRQKAKINLFS). Disulfide bonds link Cys49–Cys62, Cys55–Cys66, and Cys61–Cys70.

The protein belongs to the conotoxin O2 superfamily. Expressed by the venom duct.

Its subcellular location is the secreted. Inhibits voltage-gated ion channels. This Conus victoriae (Queen Victoria cone) protein is Conotoxin Vc6.8.